An 89-amino-acid polypeptide reads, in one-letter code: Bombyxin A-2 (89 aa).

The first 19 residues, 1–19 (MKILLAIALMLSTVMWVST), serve as a signal peptide directing secretion. Pyrrolidone carboxylic acid is present on Q20. Cystine bridges form between C29-C76, C41-C89, and C75-C80. The propeptide at 50–68 (SDAQFASYGSAWLMPYSAG) is c peptide like.

The protein belongs to the insulin family. In terms of assembly, heterodimer of a B chain and an A chain linked by two disulfide bonds.

It is found in the secreted. In terms of biological role, brain peptide responsible for activation of prothoracic glands to produce ecdysone in insects. The protein is Bombyxin A-2 (BBXA2) of Bombyx mori (Silk moth).